The primary structure comprises 160 residues: Phosphopantetheine adenylyltransferase (160 aa).

T10 is a substrate binding site. Residues 10 to 11 (TF) and H18 contribute to the ATP site. K42, L74, and R88 together coordinate substrate. ATP-binding positions include 89–91 (GLR), E99, and 124–130 (NSFISST).

It belongs to the bacterial CoaD family. Homohexamer. The cofactor is Mg(2+).

Its subcellular location is the cytoplasm. The catalysed reaction is (R)-4'-phosphopantetheine + ATP + H(+) = 3'-dephospho-CoA + diphosphate. Its pathway is cofactor biosynthesis; coenzyme A biosynthesis; CoA from (R)-pantothenate: step 4/5. Reversibly transfers an adenylyl group from ATP to 4'-phosphopantetheine, yielding dephospho-CoA (dPCoA) and pyrophosphate. The polypeptide is Phosphopantetheine adenylyltransferase (Aeromonas hydrophila subsp. hydrophila (strain ATCC 7966 / DSM 30187 / BCRC 13018 / CCUG 14551 / JCM 1027 / KCTC 2358 / NCIMB 9240 / NCTC 8049)).